A 68-amino-acid chain; its full sequence is Conotoxin Lt5.11 (68 aa).

An N-terminal signal peptide occupies residues 1-19 (MLCLPVFIILLLLASPAAP). A propeptide spanning residues 20–54 (KSLETRIQNDLIRAGLTDADLKTEKGFLSGLLNVA) is cleaved from the precursor.

This sequence belongs to the conotoxin T superfamily. Post-translationally, contains 2 disulfide bonds that can be either 'C1-C3, C2-C4' or 'C1-C4, C2-C3', since these disulfide connectivities have been observed for conotoxins with cysteine framework V (for examples, see AC P0DQQ7 and AC P81755). In terms of tissue distribution, expressed by the venom duct.

Its subcellular location is the secreted. This chain is Conotoxin Lt5.11, found in Conus litteratus (Lettered cone).